The sequence spans 187 residues: Elongation factor P (187 aa).

Residue K34 is modified to N6-(3,6-diaminohexanoyl)-5-hydroxylysine.

It belongs to the elongation factor P family. Post-translationally, may be beta-lysylated on the epsilon-amino group of Lys-34 by the combined action of EpmA and EpmB, and then hydroxylated on the C5 position of the same residue by EpmC (if this protein is present). Lysylation is critical for the stimulatory effect of EF-P on peptide-bond formation. The lysylation moiety may extend toward the peptidyltransferase center and stabilize the terminal 3-CCA end of the tRNA. Hydroxylation of the C5 position on Lys-34 may allow additional potential stabilizing hydrogen-bond interactions with the P-tRNA.

It localises to the cytoplasm. It participates in protein biosynthesis; polypeptide chain elongation. Functionally, involved in peptide bond synthesis. Alleviates ribosome stalling that occurs when 3 or more consecutive Pro residues or the sequence PPG is present in a protein, possibly by augmenting the peptidyl transferase activity of the ribosome. Modification of Lys-34 is required for alleviation. The polypeptide is Elongation factor P (Thioalkalivibrio sulfidiphilus (strain HL-EbGR7)).